Consider the following 282-residue polypeptide: ATP synthase gamma chain (282 aa).

It belongs to the ATPase gamma chain family. F-type ATPases have 2 components, CF(1) - the catalytic core - and CF(0) - the membrane proton channel. CF(1) has five subunits: alpha(3), beta(3), gamma(1), delta(1), epsilon(1). CF(0) has three main subunits: a, b and c. In this bacterium the a and b subunits are transcribed but do not seem to be translated, thus the ATP synthase consists of the alpha, beta, gamma, delta, epsilon and c subunits.

It is found in the cell membrane. In terms of biological role, produces ATP from ADP in the presence of a proton gradient across the membrane. The gamma chain is believed to be important in regulating ATPase activity and the flow of protons through the CF(0) complex. The chain is ATP synthase gamma chain from Moorella thermoacetica (strain ATCC 39073 / JCM 9320).